We begin with the raw amino-acid sequence, 80 residues long: Putative DNA-directed RNA polymerase subunit omega (80 aa).

Belongs to the RNA polymerase subunit omega family.

It localises to the plastid. The protein resides in the chloroplast. The catalysed reaction is RNA(n) + a ribonucleoside 5'-triphosphate = RNA(n+1) + diphosphate. Its function is as follows. May be involved in RNA polymerase activity. This Gracilaria tenuistipitata var. liui (Red alga) protein is Putative DNA-directed RNA polymerase subunit omega.